A 286-amino-acid polypeptide reads, in one-letter code: Gap junction alpha-6 protein (286 aa).

Residues 1-23 (MSDWSALHQLLEKVQPYSTAGGK) are Cytoplasmic-facing. Residues 24–41 (VWIKVLFIFRILLLGTAI) traverse the membrane as a helical segment. Residues 42–76 (ESAWSDEQFEFHCNTQQPGCENVCYDQAFPISHVR) are Extracellular-facing. Residues 77 to 99 (LWVLQVIFVSVPTLLHLAHVYYV) traverse the membrane as a helical segment. Over 100-151 (IRQNEKLKKQEEEELKVAHFNGASGERRLQKHTGKHIKCGSKEHGNRKMRGR) the chain is Cytoplasmic. The chain crosses the membrane as a helical span at residues 152–174 (LLLTYMASIFFKSVFEVAFLLIQ). Topologically, residues 175-209 (WYLYGFTLSAVYICEQSPCPHRVDCFLSRPTEKTI) are extracellular. The chain crosses the membrane as a helical span at residues 210-232 (FILFMLVVSMVSFVLNVIELFYV). The Cytoplasmic segment spans residues 233-286 (LFKAIKNHLGNEKEEVYCNPVELQKPSCVSSSAVLTTICSSDQVVPVGLSSFYM).

This sequence belongs to the connexin family. Alpha-type (group II) subfamily. A connexon is composed of a hexamer of connexins. Expressed in testis.

Its subcellular location is the cell membrane. It is found in the cell junction. The protein localises to the gap junction. One gap junction consists of a cluster of closely packed pairs of transmembrane channels, the connexons, through which materials of low MW diffuse from one cell to a neighboring cell. This chain is Gap junction alpha-6 protein (Gja6), found in Rattus norvegicus (Rat).